A 317-amino-acid polypeptide reads, in one-letter code: uncharacterized protein (317 aa).

The next 7 helical transmembrane spans lie at 18–38 (WWII…LIII), 58–78 (IIFG…GFIF), 92–112 (FLGH…WWSV), 130–150 (LFAT…AFGV), 165–185 (QPLS…KGEL), 202–222 (LAFL…LSTV), and 253–273 (LWGG…LMVN).

Belongs to the CbiQ family.

It localises to the cell membrane. This is an uncharacterized protein from Mycoplasma pneumoniae (strain ATCC 29342 / M129 / Subtype 1) (Mycoplasmoides pneumoniae).